A 415-amino-acid polypeptide reads, in one-letter code: Gamma-glutamyl phosphate reductase (415 aa).

This sequence belongs to the gamma-glutamyl phosphate reductase family.

The protein resides in the cytoplasm. It catalyses the reaction L-glutamate 5-semialdehyde + phosphate + NADP(+) = L-glutamyl 5-phosphate + NADPH + H(+). It functions in the pathway amino-acid biosynthesis; L-proline biosynthesis; L-glutamate 5-semialdehyde from L-glutamate: step 2/2. In terms of biological role, catalyzes the NADPH-dependent reduction of L-glutamate 5-phosphate into L-glutamate 5-semialdehyde and phosphate. The product spontaneously undergoes cyclization to form 1-pyrroline-5-carboxylate. The protein is Gamma-glutamyl phosphate reductase of Cutibacterium acnes (strain DSM 16379 / KPA171202) (Propionibacterium acnes).